Reading from the N-terminus, the 546-residue chain is Major facilitator superfamily transporter MPN_077 (546 aa).

A run of 12 helical transmembrane segments spans residues 2–22 (WGLV…IDFI), 62–82 (WTIT…VVKF), 88–108 (VMIM…GSPL), 179–199 (AFFI…IAYA), 220–240 (FWGF…PGVG), 248–268 (VWVV…FAWF), 305–325 (LLAI…QTWF), 344–364 (PILL…LSPF), 377–397 (FIFT…ATLG), 401–421 (VVGF…GWSL), 442–462 (IIFG…DIIT), and 485–505 (IAAI…IIYL).

Belongs to the major facilitator superfamily.

The protein resides in the cell membrane. This is Major facilitator superfamily transporter MPN_077 from Mycoplasma pneumoniae (strain ATCC 29342 / M129 / Subtype 1) (Mycoplasmoides pneumoniae).